Reading from the N-terminus, the 104-residue chain is Chitin-binding protein 2 (104 aa).

Oligomer in an unreduced state. Glycosylated.

Its function is as follows. Chitin-binding protein. Has antifungal activity against C.krusei, C.albicans, C.tropicalis and C.parapsilosis. Inhibits C.albicans by increasing cell membrane permeability and production of reactive oxygen species. Has no hemagglutinating activity. The sequence is that of Chitin-binding protein 2 from Moringa oleifera (Horseradish tree).